The sequence spans 254 residues: MTPQRIGFVASSAPVAQEALNVMAARYGQCPLPEADAIVALGGDGFMLQTLHETQSLDIPVYGMNRGTVGFLMNGYAEDGLRERLAEAEEEILNPLAMTAVTGAGEVFHRIAINEVSLLRAGPQAAWLKISVDGKVRMEELVCDGALVCTPAGSTAYNYSAHGPILPIGADVLALTAIAPFRPRRWRGALLPKTALVRFDVIDAQKRPVMADADGRSVRDVVSVEIRTEPAVRHRLLFDPGHGLEERLIREQFV.

Residue Asp44 is the Proton acceptor of the active site. NAD(+)-binding positions include 44 to 45 (DG), 114 to 115 (NE), Asp144, Ala152, 155 to 160 (TAYNYS), and Ala179.

This sequence belongs to the NAD kinase family. A divalent metal cation is required as a cofactor.

It localises to the cytoplasm. It carries out the reaction NAD(+) + ATP = ADP + NADP(+) + H(+). Involved in the regulation of the intracellular balance of NAD and NADP, and is a key enzyme in the biosynthesis of NADP. Catalyzes specifically the phosphorylation on 2'-hydroxyl of the adenosine moiety of NAD to yield NADP. The sequence is that of NAD kinase from Cereibacter sphaeroides (strain ATCC 17029 / ATH 2.4.9) (Rhodobacter sphaeroides).